The primary structure comprises 393 residues: Erythronate-4-phosphate dehydrogenase (393 aa).

Substrate is bound by residues Ser-57 and Thr-79. Position 159 (Asp-159) interacts with NAD(+). Arg-229 is a catalytic residue. Asp-253 is a binding site for NAD(+). Residue Glu-258 is part of the active site. His-275 serves as the catalytic Proton donor. Residue Gly-278 coordinates NAD(+). Residue Tyr-279 coordinates substrate.

It belongs to the D-isomer specific 2-hydroxyacid dehydrogenase family. PdxB subfamily. Homodimer.

It is found in the cytoplasm. The enzyme catalyses 4-phospho-D-erythronate + NAD(+) = (R)-3-hydroxy-2-oxo-4-phosphooxybutanoate + NADH + H(+). The protein operates within cofactor biosynthesis; pyridoxine 5'-phosphate biosynthesis; pyridoxine 5'-phosphate from D-erythrose 4-phosphate: step 2/5. Functionally, catalyzes the oxidation of erythronate-4-phosphate to 3-hydroxy-2-oxo-4-phosphonooxybutanoate. This Colwellia psychrerythraea (strain 34H / ATCC BAA-681) (Vibrio psychroerythus) protein is Erythronate-4-phosphate dehydrogenase.